Here is a 346-residue protein sequence, read N- to C-terminus: Bifunctional phosphatase IMPL2, chloroplastic (346 aa).

A chloroplast-targeting transit peptide spans 1–61 (MLAQSHFFSK…VSRRRFCLTM (61 aa)). Residues Glu-147, Asp-165, and Asp-168 each coordinate Mg(2+). Glu-147 is a binding site for substrate. Residues 167–170 (IDGT), 263–265 (GCD), Glu-282, and Asp-289 contribute to the substrate site. Asp-289 is a binding site for Mg(2+).

Belongs to the inositol monophosphatase superfamily. Mg(2+) serves as cofactor. Ubiquitous. High expression in roots. Expressed in pistil and seed endosperm.

It localises to the plastid. The protein resides in the chloroplast. The enzyme catalyses a myo-inositol phosphate + H2O = myo-inositol + phosphate. The catalysed reaction is L-histidinol phosphate + H2O = L-histidinol + phosphate. It catalyses the reaction beta-L-galactose 1-phosphate + H2O = L-galactose + phosphate. It participates in amino-acid biosynthesis; L-histidine biosynthesis; L-histidine from 5-phospho-alpha-D-ribose 1-diphosphate: step 8/9. Its pathway is polyol metabolism; myo-inositol biosynthesis; myo-inositol from D-glucose 6-phosphate: step 2/2. In terms of biological role, phosphatase required for histidine production. Also acts on L-galactose 1-phosphate (L-Gal 1-P), D-myoinositol 3-phosphate (D-Ins 3-P) and D-myoinositol 1-phosphate (D-Ins 1-P). The sequence is that of Bifunctional phosphatase IMPL2, chloroplastic (HISN7) from Arabidopsis thaliana (Mouse-ear cress).